A 383-amino-acid chain; its full sequence is Lipid-A-disaccharide synthase (383 aa).

This sequence belongs to the LpxB family.

It carries out the reaction a lipid X + a UDP-2-N,3-O-bis[(3R)-3-hydroxyacyl]-alpha-D-glucosamine = a lipid A disaccharide + UDP + H(+). The protein operates within bacterial outer membrane biogenesis; LPS lipid A biosynthesis. In terms of biological role, condensation of UDP-2,3-diacylglucosamine and 2,3-diacylglucosamine-1-phosphate to form lipid A disaccharide, a precursor of lipid A, a phosphorylated glycolipid that anchors the lipopolysaccharide to the outer membrane of the cell. In Aliivibrio fischeri (strain ATCC 700601 / ES114) (Vibrio fischeri), this protein is Lipid-A-disaccharide synthase.